The following is a 98-amino-acid chain: NADH-ubiquinone oxidoreductase chain 4L (98 aa).

The next 3 membrane-spanning stretches (helical) occupy residues 1–21, 28–48, and 59–79; these read MMSI…GVLI, STLL…ALLI, and APLI…ALLV.

The protein belongs to the complex I subunit 4L family. In terms of assembly, core subunit of respiratory chain NADH dehydrogenase (Complex I) which is composed of 45 different subunits.

The protein localises to the mitochondrion inner membrane. The enzyme catalyses a ubiquinone + NADH + 5 H(+)(in) = a ubiquinol + NAD(+) + 4 H(+)(out). Core subunit of the mitochondrial membrane respiratory chain NADH dehydrogenase (Complex I) which catalyzes electron transfer from NADH through the respiratory chain, using ubiquinone as an electron acceptor. Part of the enzyme membrane arm which is embedded in the lipid bilayer and involved in proton translocation. The protein is NADH-ubiquinone oxidoreductase chain 4L (MT-ND4L) of Osphranter robustus (Wallaroo).